The sequence spans 369 residues: Prenyltransferase malB (369 aa).

Glutamate 87 contacts substrate. 2 residues coordinate dimethylallyl diphosphate: arginine 100 and tyrosine 189. Position 191 (tyrosine 191) interacts with substrate.

Belongs to the tryptophan dimethylallyltransferase family.

Prenyltransferase; part of the gene cluster that mediates the biosynthesis of malbrancheamide, a dichlorinated fungal indole alkaloid that belongs to a family of natural products containing a characteristic bicyclo[2.2.2]diazaoctane core. The first step of malbrancheamide biosynthesis involves coupling of L-proline and L-tryptophan by malG, a bimodular NRPS, to produce L-Pro-L-Trp aldehyde through reductive offloading. This compound undergoes spontaneous cyclization and dehydration to give a dienamine which is reverse prenylated at C-2 by malE. The other prenyltransferase present in the cluster, malB, displays modest activity, suggesting that may be a redundant gene in the pathway. Subsequently, a [4+2] Diels-Alder cyclo-addition catalyzed by the bifunctional enzyme malC forms the characteristic bicyclo[2.2.2]diazaoctane ring of premalbrancheamid. Finally, the flavin-dependent halogenase malA catalyzes the iterative dichlorination of the indole ring of premalbrancheamide to yield C-9 monochlorinated malbrancheamide B, C-8 monochlorinated isomalbrancheamide B, and dichlorinated malbrancheamide. MalA is also able to brominate premalbrancheamide at C-9 to yield malbrancheamide C, and, to a lesser extend, at C-8 to yield isomalbrancheamide C. Finally, malA can brominate C-9 monochlorinated malbrancheamide B at C-8 to yield malbrancheamide D, or C-8 monochlorinated isomalbrancheamide B at C-9 to produce isomalbrancheamide D. The protein is Prenyltransferase malB of Malbranchea aurantiaca.